The sequence spans 468 residues: Cysteine--tRNA ligase (468 aa).

C27 is a binding site for Zn(2+). A 'HIGH' region motif is present at residues 29–39 (PTVYDDAHLGH). Zn(2+)-binding residues include C204, H234, and E238. The short motif at 266-270 (KMSKS) is the 'KMSKS' region element. K269 serves as a coordination point for ATP.

Belongs to the class-I aminoacyl-tRNA synthetase family. As to quaternary structure, monomer. It depends on Zn(2+) as a cofactor.

The protein localises to the cytoplasm. The enzyme catalyses tRNA(Cys) + L-cysteine + ATP = L-cysteinyl-tRNA(Cys) + AMP + diphosphate. In Campylobacter hominis (strain ATCC BAA-381 / DSM 21671 / CCUG 45161 / LMG 19568 / NCTC 13146 / CH001A), this protein is Cysteine--tRNA ligase.